The sequence spans 358 residues: UPF0725 protein At4g29550 (358 aa).

A disordered region spans residues 31–82 (LNKHPPSGSGWTDEDDDNDDVFSSSFISKEELSDAVHNDPPSGWTDEDDDDQ). Residues 58 to 67 (SKEELSDAVH) show a composition bias toward basic and acidic residues.

It belongs to the UPF0725 (EMB2204) family.

This chain is UPF0725 protein At4g29550, found in Arabidopsis thaliana (Mouse-ear cress).